The sequence spans 388 residues: Acetate kinase (388 aa).

Mg(2+) is bound at residue asparagine 8. Lysine 15 is a binding site for ATP. Residue arginine 88 participates in substrate binding. Aspartate 144 functions as the Proton donor/acceptor in the catalytic mechanism. ATP contacts are provided by residues 202-206 (HLGNG), 276-278 (DMR), and 321-325 (GVGEN). Glutamate 375 contacts Mg(2+).

It belongs to the acetokinase family. Homodimer. Requires Mg(2+) as cofactor. The cofactor is Mn(2+).

It localises to the cytoplasm. It catalyses the reaction acetate + ATP = acetyl phosphate + ADP. It participates in metabolic intermediate biosynthesis; acetyl-CoA biosynthesis; acetyl-CoA from acetate: step 1/2. Functionally, catalyzes the formation of acetyl phosphate from acetate and ATP. Can also catalyze the reverse reaction. This chain is Acetate kinase, found in Mycoplasmoides gallisepticum (strain R(low / passage 15 / clone 2)) (Mycoplasma gallisepticum).